A 312-amino-acid chain; its full sequence is Tetraspanin-17 (312 aa).

4 helical membrane-spanning segments follow: residues 17 to 37, 64 to 84, 89 to 109, and 274 to 294; these read IFSIYYWLSALGHVFLGLWML, VSLVCGCAQLLVGFLGLCGAV, FLLLAFVMFLIGTFLADVAMG, and IWIFVGFGFGSALTMMLGICL.

It belongs to the tetraspanin (TM4SF) family. As to expression, expressed in dopaminergic neurons, head muscles, vulva and spermatheca.

The protein localises to the cell membrane. The protein resides in the cell projection. It localises to the dendrite. It is found in the axon. In terms of biological role, protects dopaminergic neurons against oxidative stress-induced neurodegeneration. May act partly via dopamine receptor dop-2 to negatively regulate dopamine reuptake transporter dat-1 activity. Also plays a role in modulating behaviors linked to dopamine signaling. Confers protection against oxidative stress in the whole body. In Caenorhabditis elegans, this protein is Tetraspanin-17.